The sequence spans 93 residues: MTRSIWKGPFVDTCLFKQKKIRWRIWSRRSCILPQFVGCYAQIYNGKGFVGLKITEEMVGHKFGEFASTRKTSSLGKRALPSKTKIKPIKKVR.

Belongs to the universal ribosomal protein uS19 family.

Its subcellular location is the mitochondrion. The polypeptide is Small ribosomal subunit protein uS19m (RPS19) (Marchantia polymorpha (Common liverwort)).